The primary structure comprises 439 residues: MVQSLQTFSVRDIASGGWFKQHEYIEKLNMQAILNASAGQEEMIKDLLVTHGKIPTLIHELISVEIWKLKVFHVLCQLQDFQPKSTFPLYMVIHHEATIINLLETIFFHKEVCESAEDLTLDLIDYCYRKLTLLASQSSDRRTLSQNRLLPHTANEASSLEELKQQAEALEFDIALKCLSVTRYISDHIDSLPLSVMNRLLNTHNLPCLLVELLHQSPWTQSEKGQLQKYESGRWYPVPAEDQLKMTKLDGQAWIALYNLLLRPECQQKYNINSFTKGQLLKLRSFLTEVLLDQLPNLVDLQRFLSHLSVSEPTPPKKELILEQVPEVWDSIINENSGKWKAIAKYQVKQAFSPSEEDLRSQAKRWAQTYNMDVMEALVPEKPKCGSCGSEASKRCSRCQSEWYCKRECQVKHWQKHKKACDMVSEAMKNMQEEIQKEA.

8 residues coordinate Zn(2+): Cys385, Cys388, Cys396, Cys399, Cys405, Cys409, His417, and Cys421. The MYND-type zinc finger occupies 385–421; the sequence is CGSCGSEASKRCSRCQSEWYCKRECQVKHWQKHKKAC.

The protein belongs to the ZMYND10 family. As to quaternary structure, interacts with LRRC6.

Its subcellular location is the cytoplasm. It localises to the cytoskeleton. The protein localises to the cilium basal body. The protein resides in the microtubule organizing center. It is found in the centrosome. Its subcellular location is the centriolar satellite. It localises to the apical cell membrane. The protein localises to the dynein axonemal particle. In terms of biological role, plays a role in axonemal structure organization and motility. Involved in axonemal pre-assembly of inner and outer dynein arms (IDA and ODA, respectively) for proper axoneme building for cilia motility. May act by indirectly regulating transcription of dynein proteins. This is Zinc finger MYND domain-containing protein 10 (zmynd10) from Xenopus laevis (African clawed frog).